Consider the following 172-residue polypeptide: Adenine phosphoribosyltransferase (172 aa).

This sequence belongs to the purine/pyrimidine phosphoribosyltransferase family. As to quaternary structure, homodimer.

The protein localises to the cytoplasm. The enzyme catalyses AMP + diphosphate = 5-phospho-alpha-D-ribose 1-diphosphate + adenine. It functions in the pathway purine metabolism; AMP biosynthesis via salvage pathway; AMP from adenine: step 1/1. Its function is as follows. Catalyzes a salvage reaction resulting in the formation of AMP, that is energically less costly than de novo synthesis. The protein is Adenine phosphoribosyltransferase of Nostoc punctiforme (strain ATCC 29133 / PCC 73102).